A 135-amino-acid chain; its full sequence is Salivary protein 15 Iper-1 (135 aa).

The signal sequence occupies residues 1 to 22 (MESFVAMKVVCILFLFVVAAEA). Asparagine 93 and asparagine 104 each carry an N-linked (GlcNAc...) asparagine glycan. The segment at 116 to 135 (GPNKQTCADKSKCVGHIPGC) is CD4-binding.

It belongs to the salp15 family. Interacts with host CD4. Interacts with host DC-SIGN (CD209). In terms of assembly, (Microbial infection) Interacts with Borrelia outer surface protein C (OspC). As to expression, expressed in salivary glands from feeding female ticks. Highly expressed 4 days after start of feeding.

It is found in the secreted. Salivary tick protein that downregulates host immune system by binding to both dendritic cells, and CD4(+) T cells. Specifically binds to the CD4 coreceptor on T cells. This interaction prevents the activation of the Src kinase, Lck, and its downstream substrate Zap-70, and results in deficient activation of PLCgamma1, the repression of calcium fluxes triggered by T-cell antigen receptor (TCR) ligation, and a subsequent reduction in interleukin-2 production. This salivary protein also binds to DC-SIGN (CD209) on dendritic cells (DC) and activates the Raf-1 kinase/MEK signaling pathway that results in down-regulating expression of pro-inflammatory cytokines. Furthermore, it inhibits T cell proliferation induced by DCs. It also inhibits in vitro keratinocyte inflammation induced by Borrelia burgdorferi or by the major outer surface protein (OspC) of Borrelia. In addition, it downregulates chemokines and monocyte chemoattractant protein 1, as well as several antimicrobial peptides such as defensins, cathelicidin, psoriasin, and RNase 7. Apart from its immunomodulatory activities, it is also associated with protection of Borrelia spirochetes from antibody-mediated killing through its binding to OspC. In vivo, tests on different immune disease animal models show promising therapeutic results, e.g., in inhibiting HIV infection, experimental autoimmune encephalomyelitis, transplantation rejection, and asthma. Its function is as follows. (Microbial infection) Protects Borrelia garinii from anti-Borrelia antibody-mediated cytotoxicity in vitro. May facilitate B.garinii transmission in mouse model. Functionally, (Microbial infection) Protects Borrelia burgdorferi from anti-Borrelia antibody-mediated cytotoxicity in vitro. In terms of biological role, (Microbial infection) Protects Borrelia afzelii from anti-Borrelia antibody-mediated cytotoxicity in vitro. This is Salivary protein 15 Iper-1 from Ixodes persulcatus (Taiga tick).